The primary structure comprises 319 residues: Ribonuclease Z (319 aa).

7 residues coordinate Zn(2+): H62, H64, D66, H67, H145, D215, and H273. D66 acts as the Proton acceptor in catalysis.

The protein belongs to the RNase Z family. Homodimer. Zn(2+) serves as cofactor.

The enzyme catalyses Endonucleolytic cleavage of RNA, removing extra 3' nucleotides from tRNA precursor, generating 3' termini of tRNAs. A 3'-hydroxy group is left at the tRNA terminus and a 5'-phosphoryl group is left at the trailer molecule.. Its function is as follows. Zinc phosphodiesterase, which displays some tRNA 3'-processing endonuclease activity. Probably involved in tRNA maturation, by removing a 3'-trailer from precursor tRNA. The protein is Ribonuclease Z of Borrelia hermsii (strain HS1 / DAH).